The chain runs to 368 residues: Reverse transcriptase-like protein (368 aa).

The 228-residue stretch at 91-318 folds into the Reverse transcriptase domain; it reads TRELTVPYWY…SELNWLGHKV (228 aa).

The protein localises to the mitochondrion. The protein is Reverse transcriptase-like protein (RTL) of Chlamydomonas reinhardtii (Chlamydomonas smithii).